A 180-amino-acid polypeptide reads, in one-letter code: DNA-directed RNA polymerase subunit Rpo7 (180 aa).

Residues 82–165 (QEVVEGEVLQ…RLPRIALTMR (84 aa)) enclose the S1 motif domain.

The protein belongs to the eukaryotic RPB7/RPC8 RNA polymerase subunit family. Part of the 13-subunit RNA polymerase complex. Forms a stalk with Rpo4 that extends from the main structure.

It is found in the cytoplasm. It carries out the reaction RNA(n) + a ribonucleoside 5'-triphosphate = RNA(n+1) + diphosphate. Functionally, DNA-dependent RNA polymerase (RNAP) catalyzes the transcription of DNA into RNA using the four ribonucleoside triphosphates as substrates. This Saccharolobus solfataricus (strain ATCC 35092 / DSM 1617 / JCM 11322 / P2) (Sulfolobus solfataricus) protein is DNA-directed RNA polymerase subunit Rpo7.